The chain runs to 211 residues: Protein-L-isoaspartate O-methyltransferase (211 aa).

Residue serine 60 is part of the active site.

The protein belongs to the methyltransferase superfamily. L-isoaspartyl/D-aspartyl protein methyltransferase family.

Its subcellular location is the cytoplasm. It catalyses the reaction [protein]-L-isoaspartate + S-adenosyl-L-methionine = [protein]-L-isoaspartate alpha-methyl ester + S-adenosyl-L-homocysteine. Functionally, catalyzes the methyl esterification of L-isoaspartyl residues in peptides and proteins that result from spontaneous decomposition of normal L-aspartyl and L-asparaginyl residues. It plays a role in the repair and/or degradation of damaged proteins. This Pseudomonas aeruginosa (strain LESB58) protein is Protein-L-isoaspartate O-methyltransferase.